A 580-amino-acid polypeptide reads, in one-letter code: MAKRVVSPNPMLSLETENIAKMGTLTADSLGSMWNVFTKCAENLENGRRLENISWRLWYREAMMSDANDACQIACQESSVPDLSSSCDSINSTVESDAGHVVDSNSFNRIDNVSVNAPIVNEVSLQAPMKGGSHSSIVRPQAKRSSSRLLSTDAFSQFISSFSPPEKPSMKDLALFHGNKSPSSKETIPKVSNSNSSDTSTDDQAYLNVSVSENEHADRSIKTHSSAPPLNQQKSSTSVNDAVSKAIQLVKSTSDLGSLSTNTSSTAQKNKSRKPTKSFSDAVAAASRAKELEKEKLSKVTVTPDDSTSIIRGFDPRLPVLSTKNVSHEEKSHSVQDDKSKQLLKPNPTQPYFYLRGSFDTGHSASSSICSAAVDSESVNSADFPHRTVYDPLPTHAIAESISQENVIEDDDDDDDAWVSVDEAESPHFTKRSPAPYLSKSFRNSALSLLLSQDEKLQHDVRSASSAALNLPRDTDIKATPNLSQSGNINSDNSDLSNYPYNDYRVYRMSHCSSNSNKVLASEISESLRRDLLWERRQKAAMNSAVLRRQSSQSSGANDDKEVRNRKVVEKGFANDCSVW.

5 disordered regions span residues 161–241 (SFSP…SVND), 256–281 (LGSL…SFSD), 325–345 (NVSH…QLLK), 472–495 (PRDT…DNSD), and 544–564 (SAVL…KEVR). The span at 192 to 203 (SNSNSSDTSTDD) shows a compositional bias: low complexity. Polar residues-rich tracts occupy residues 223–241 (THSS…SVND) and 256–269 (LGSL…TAQK). Residues 326-341 (VSHEEKSHSVQDDKSK) show a composition bias toward basic and acidic residues. Over residues 481-495 (PNLSQSGNINSDNSD) the composition is skewed to polar residues.

This is an uncharacterized protein from Schizosaccharomyces pombe (strain 972 / ATCC 24843) (Fission yeast).